We begin with the raw amino-acid sequence, 188 residues long: MSIKSDRWIRHMAEEHGMIEPFSPRQVRHVEGNSIISYGLSSYGYDIRCAGEFKVFTNVRSVIVDPKNFSEHSFVDFTGDTCIIPPNSFALARTLEYFRIPRNVLTICLGKSTYARCGIIVNVTPFEPEWEGYVTLEFSNTTPLPAKIYANEGVAQVLFLESDEVCEVSYADRGGKYQGQSGVTLPKA.

DCTP-binding positions include 111 to 116 (KSTYAR), 135 to 137 (TLE), Q156, Y170, and Q180. The Proton donor/acceptor role is filled by E137.

This sequence belongs to the dCTP deaminase family. In terms of assembly, homotrimer.

It carries out the reaction dCTP + H2O + H(+) = dUTP + NH4(+). It participates in pyrimidine metabolism; dUMP biosynthesis; dUMP from dCTP (dUTP route): step 1/2. Catalyzes the deamination of dCTP to dUTP. The polypeptide is dCTP deaminase (Acidithiobacillus ferrooxidans (strain ATCC 23270 / DSM 14882 / CIP 104768 / NCIMB 8455) (Ferrobacillus ferrooxidans (strain ATCC 23270))).